Consider the following 117-residue polypeptide: MARVKTGVVRRRRHKKVLKLARGFYSARHKHFRKAKEQLERSLVYAFRDRRAKKRDFRRLWIIRINAACRLNDISYSRFMNGLKKANIALDRKVLANLAMNDAAAFAAIVAEAKKAL.

This sequence belongs to the bacterial ribosomal protein bL20 family.

Functionally, binds directly to 23S ribosomal RNA and is necessary for the in vitro assembly process of the 50S ribosomal subunit. It is not involved in the protein synthesizing functions of that subunit. In Campylobacter fetus subsp. fetus (strain 82-40), this protein is Large ribosomal subunit protein bL20.